The primary structure comprises 499 residues: UDP-N-acetylmuramoylalanine--D-glutamate ligase (499 aa).

Gly120 to Thr126 lines the ATP pocket.

Belongs to the MurCDEF family.

The protein resides in the cytoplasm. It catalyses the reaction UDP-N-acetyl-alpha-D-muramoyl-L-alanine + D-glutamate + ATP = UDP-N-acetyl-alpha-D-muramoyl-L-alanyl-D-glutamate + ADP + phosphate + H(+). The protein operates within cell wall biogenesis; peptidoglycan biosynthesis. Functionally, cell wall formation. Catalyzes the addition of glutamate to the nucleotide precursor UDP-N-acetylmuramoyl-L-alanine (UMA). The protein is UDP-N-acetylmuramoylalanine--D-glutamate ligase of Nostoc punctiforme (strain ATCC 29133 / PCC 73102).